We begin with the raw amino-acid sequence, 162 residues long: Cyclic pyranopterin monophosphate synthase (162 aa).

Residues 79–81 and 117–118 contribute to the substrate site; these read LCH and ME. The active site involves aspartate 132.

The protein belongs to the MoaC family. In terms of assembly, homohexamer; trimer of dimers.

It catalyses the reaction (8S)-3',8-cyclo-7,8-dihydroguanosine 5'-triphosphate = cyclic pyranopterin phosphate + diphosphate. Its pathway is cofactor biosynthesis; molybdopterin biosynthesis. Its function is as follows. Catalyzes the conversion of (8S)-3',8-cyclo-7,8-dihydroguanosine 5'-triphosphate to cyclic pyranopterin monophosphate (cPMP). In Bordetella petrii (strain ATCC BAA-461 / DSM 12804 / CCUG 43448), this protein is Cyclic pyranopterin monophosphate synthase.